A 148-amino-acid chain; its full sequence is Deoxyuridine 5'-triphosphate nucleotidohydrolase (148 aa).

Residues 67–69, asparagine 80, 84–86, and methionine 94 each bind substrate; these read RSG and LID.

The protein belongs to the dUTPase family. Mg(2+) serves as cofactor.

It catalyses the reaction dUTP + H2O = dUMP + diphosphate + H(+). Its pathway is pyrimidine metabolism; dUMP biosynthesis; dUMP from dCTP (dUTP route): step 2/2. Functionally, this enzyme is involved in nucleotide metabolism: it produces dUMP, the immediate precursor of thymidine nucleotides and it decreases the intracellular concentration of dUTP so that uracil cannot be incorporated into DNA. The protein is Deoxyuridine 5'-triphosphate nucleotidohydrolase of Paraburkholderia phymatum (strain DSM 17167 / CIP 108236 / LMG 21445 / STM815) (Burkholderia phymatum).